Reading from the N-terminus, the 263-residue chain is uncharacterized protein (263 aa).

This is an uncharacterized protein from Archaeoglobus fulgidus (strain ATCC 49558 / DSM 4304 / JCM 9628 / NBRC 100126 / VC-16).